The following is a 263-amino-acid chain: UPF0246 protein Strop_2927 (263 aa).

The protein belongs to the UPF0246 family.

This is UPF0246 protein Strop_2927 from Salinispora tropica (strain ATCC BAA-916 / DSM 44818 / JCM 13857 / NBRC 105044 / CNB-440).